Consider the following 253-residue polypeptide: 5'-nucleotidase SurE (253 aa).

4 residues coordinate a divalent metal cation: D8, D9, S39, and N92.

It belongs to the SurE nucleotidase family. A divalent metal cation is required as a cofactor.

The protein localises to the cytoplasm. It carries out the reaction a ribonucleoside 5'-phosphate + H2O = a ribonucleoside + phosphate. Nucleotidase that shows phosphatase activity on nucleoside 5'-monophosphates. The chain is 5'-nucleotidase SurE from Burkholderia mallei (strain NCTC 10247).